The primary structure comprises 193 residues: Interferon lambda-2 (193 aa).

Residues Met-1–Ala-19 form the signal peptide. An N-linked (GlcNAc...) asparagine glycan is attached at Asn-105.

This sequence belongs to the lambda interferon family.

It is found in the secreted. Functionally, cytokine with antiviral, antitumour and immunomodulatory activities. Plays a critical role in the antiviral host defense, predominantly in the epithelial tissues. Acts as a ligand for the heterodimeric class II cytokine receptor composed of IL10RB and IFNLR1, and receptor engagement leads to the activation of the JAK/STAT signaling pathway resulting in the expression of IFN-stimulated genes (ISG), which mediate the antiviral state. Has a restricted receptor distribution and therefore restricted targets: is primarily active in epithelial cells and this cell type-selective action is because of the epithelial cell-specific expression of its receptor IFNLR1. Seems not to be essential for early virus-activated host defense in vaginal infection, but plays an important role in Toll-like receptor (TLR)-induced antiviral defense. Plays a significant role in the antiviral immune defense in the intestinal epithelium. Exerts an immunomodulatory effect by up-regulating MHC class I antigen expression. The chain is Interferon lambda-2 (Ifnl2) from Mus musculus (Mouse).